The chain runs to 103 residues: Cobalt transport protein CbiN (103 aa).

A run of 2 helical transmembrane segments spans residues 6-26 and 68-88; these read VLTN…PFFV and LLFA…LGYL.

Belongs to the CbiN family. In terms of assembly, forms an energy-coupling factor (ECF) transporter complex composed of an ATP-binding protein (A component, CbiO), a transmembrane protein (T component, CbiQ) and 2 possible substrate-capture proteins (S components, CbiM and CbiN) of unknown stoichimetry.

The protein localises to the cell membrane. It functions in the pathway cofactor biosynthesis; adenosylcobalamin biosynthesis. Functionally, part of the energy-coupling factor (ECF) transporter complex CbiMNOQ involved in cobalt import. The chain is Cobalt transport protein CbiN from Clostridium perfringens (strain 13 / Type A).